The following is a 461-amino-acid chain: Ufm1-specific protease 2 (461 aa).

Residues cysteine 294, aspartate 418, and histidine 420 contribute to the active site.

The protein belongs to the peptidase C78 family.

It is found in the endoplasmic reticulum. It localises to the cytoplasm. Its subcellular location is the nucleus. In terms of biological role, thiol-dependent isopeptidase that specifically cleaves UFM1, a ubiquitin-like modifier protein, from conjugated proteins, such as CD274/PD-L1, CYB5R3, DDRGK1, MRE11, RPL26/uL24, TRIP4 and RPL26/uL24. While it is also able to mediate the processing of UFM1 precursors, a prerequisite for conjugation reactions, UFSP2 mainly acts as a protein deUFMylase that mediates deconjugation of UFM1 from target proteins. Mediates deUFMylation of RPL26/uL24, a critical step to release the UFM1 ribosome E3 ligase (UREL) complex during the recycling of 60S ribosome subunits from the endoplasmic reticulum. Catalyzes deUFMylation of TRIP4, regulating intracellular nuclear receptors transactivation and thereby regulate cell proliferation and differentiation. This chain is Ufm1-specific protease 2, found in Rattus norvegicus (Rat).